The sequence spans 121 residues: Movement protein TGBp3 (121 aa).

The disordered stretch occupies residues 1–40 (MHYPTEADTSTGPNPSATSAPVRPRHVTPSLSPSSSSSPS). Residues 1–43 (MHYPTEADTSTGPNPSATSAPVRPRHVTPSLSPSSSSSPSPDS) lie on the Lumenal side of the membrane. Polar residues predominate over residues 7–19 (ADTSTGPNPSATS). Residues 29-40 (PSLSPSSSSSPS) are compositionally biased toward low complexity. The chain crosses the membrane as a helical span at residues 44–64 (FYYFLAAAVILTAALAAALLT). The Cytoplasmic segment spans residues 65–121 (PNPGCTIVITGHTTIIQGSCPIPPQLVLAAHPRGLSLEQYLKFTNTLPDGSQHRSHR).

This sequence belongs to the Tymovirales TGBp3 protein family.

It localises to the host endoplasmic reticulum membrane. In terms of biological role, plays a role in viral cell-to-cell propagation, by facilitating genome transport to neighboring plant cells through plasmosdesmata. May induce the formation of granular vesicles derived from the Endoplasmic reticulum, which align on actin filaments. This Plantago asiatica (P1AMV) protein is Movement protein TGBp3.